Reading from the N-terminus, the 67-residue chain is Small ribosomal subunit protein eS17 (67 aa).

It belongs to the eukaryotic ribosomal protein eS17 family.

The sequence is that of Small ribosomal subunit protein eS17 from Pyrococcus abyssi (strain GE5 / Orsay).